Consider the following 302-residue polypeptide: Protoheme IX farnesyltransferase (302 aa).

Helical transmembrane passes span 27–47 (VVAL…PGMV), 53–73 (LFGL…NHVI), 100–120 (LVFA…AVNV), 121–141 (LTAV…TVFL), 149–169 (IVWG…AVTG), 175–195 (PLLL…ALAI), 215–235 (VAFT…VSLV), 237–257 (FIIH…GIGF), and 273–293 (AMPT…LLLV).

This sequence belongs to the UbiA prenyltransferase family. Protoheme IX farnesyltransferase subfamily.

It is found in the cell inner membrane. It catalyses the reaction heme b + (2E,6E)-farnesyl diphosphate + H2O = Fe(II)-heme o + diphosphate. The protein operates within porphyrin-containing compound metabolism; heme O biosynthesis; heme O from protoheme: step 1/1. Functionally, converts heme B (protoheme IX) to heme O by substitution of the vinyl group on carbon 2 of heme B porphyrin ring with a hydroxyethyl farnesyl side group. In Thioalkalivibrio sulfidiphilus (strain HL-EbGR7), this protein is Protoheme IX farnesyltransferase.